Consider the following 391-residue polypeptide: MASSVATLVKSLDKINAADFESDEAARVNAIAAAQKMIHRLQSGVERGIELTHQRSTVFPIIDVFEDLGLWEAWASQGHEISLEGLAQLSNTPLALNLLRRLCRLLTAADIFEEKSEDCYTPTELSLYMGDKTKGSQVSQGSAPGWVGSYTNLPIFLKETAYQEPLDPKKSAYSKTAGKSFWEELSQDPLQQENFGRFMSSWAKFKVPWPAFYDTESLVRGAEPGMPILVDIGGNDGTDVERFLAKHPGVAAGSLILQDRPAALKLAKVDQKIELMPHDFFTPQPVIGSRAYFFHAVLHDWDDAHALDILRNTVPAMRKGYSKLLILDIAIPRTGASLIQAAMDISMMSLLSSLERPITTWEILLKKAGLKIVKFWPDPRRYETLIEAELE.

S-adenosyl-L-methionine contacts are provided by residues Gly-233–Gly-234, Asp-259, and Asp-279–Phe-280. The active-site Proton acceptor is His-299.

It belongs to the class I-like SAM-binding methyltransferase superfamily. Cation-independent O-methyltransferase family. COMT subfamily.

The protein operates within mycotoxin biosynthesis. Functionally, O-methyltransferase; part of the core atranone cluster (CAC) which products are predicted to catalyze most or all steps of mycotoxin atranone synthesis, starting from geranylgeranyl pyrophosphate (GGPP). The initial cyclization of GGPP to dolabellane is probably performed by the terpene cyclase ATR13. The Baeyer-Villiger oxidation near the end of the atranone synthesis, which converts atranones D and E to atranones F and G is predicted to be catalyzed by the monooxygenase ATR8. Of the CAC's other predicted gene products, the reducing PKS ATR6 might synthesize a polyketide chain. This polyketide is probably transferred onto the atranone backbone by the polyketide transferase ATR5. Other predicted CAC products include 4 oxygenases (ATR2, ATR3, ATR4, and ATR14), 3 short-chain reductases (ATR7, ATR9, and ATR10), and a methyltransferase (ATR12). These may all be involved in the various steps of atranone biosynthesis, although their specific roles must await experimental determination. The polypeptide is O-methyltransferase ATR12 (Stachybotrys chlorohalonatus (strain IBT 40285)).